A 336-amino-acid polypeptide reads, in one-letter code: Cyclin-H1-1 (336 aa).

Ala-2 carries the N-acetylalanine modification. Residues 297–336 are disordered; sequence KSCLGHSSSHDESKKREKRSKHKSHRSSNDTPNGAPPPIG. Residues 312–322 show a composition bias toward basic residues; that stretch reads REKRSKHKSHR.

Belongs to the cyclin family. As to quaternary structure, interacts with CDKA-1, CDKD-2 and CDKD-3, but not CDKD-1 and CDKF-1.

It is found in the cytoplasm. The protein localises to the nucleus. Associates with CDK-2 and CDK-3 and activates the CDK kinases. The sequence is that of Cyclin-H1-1 (CYCH1-1) from Arabidopsis thaliana (Mouse-ear cress).